A 144-amino-acid polypeptide reads, in one-letter code: Universal stress protein A (144 aa).

The protein belongs to the universal stress protein A family. In terms of assembly, homodimer.

The protein resides in the cytoplasm. Its function is as follows. Required for resistance to DNA-damaging agents. This Salmonella typhimurium (strain LT2 / SGSC1412 / ATCC 700720) protein is Universal stress protein A (uspA).